The primary structure comprises 366 residues: Probable dual-specificity RNA methyltransferase RlmN (366 aa).

Glu107 (proton acceptor) is an active-site residue. Positions 113–342 constitute a Radical SAM core domain; sequence AEERMTACLS…MAQKFHVTVR (230 aa). Cys120 and Cys353 are oxidised to a cystine. Residues Cys127, Cys131, and Cys134 each contribute to the [4Fe-4S] cluster site. S-adenosyl-L-methionine contacts are provided by residues 177 to 178, Ser210, 233 to 235, and Asn310; these read GE and SLH. The active-site S-methylcysteine intermediate is the Cys353.

Belongs to the radical SAM superfamily. RlmN family. It depends on [4Fe-4S] cluster as a cofactor.

The protein localises to the cytoplasm. It carries out the reaction adenosine(2503) in 23S rRNA + 2 reduced [2Fe-2S]-[ferredoxin] + 2 S-adenosyl-L-methionine = 2-methyladenosine(2503) in 23S rRNA + 5'-deoxyadenosine + L-methionine + 2 oxidized [2Fe-2S]-[ferredoxin] + S-adenosyl-L-homocysteine. The enzyme catalyses adenosine(37) in tRNA + 2 reduced [2Fe-2S]-[ferredoxin] + 2 S-adenosyl-L-methionine = 2-methyladenosine(37) in tRNA + 5'-deoxyadenosine + L-methionine + 2 oxidized [2Fe-2S]-[ferredoxin] + S-adenosyl-L-homocysteine. Functionally, specifically methylates position 2 of adenine 2503 in 23S rRNA and position 2 of adenine 37 in tRNAs. The protein is Probable dual-specificity RNA methyltransferase RlmN of Chlorobium chlorochromatii (strain CaD3).